Consider the following 182-residue polypeptide: UPF0301 protein CHU_1773 (182 aa).

It belongs to the UPF0301 (AlgH) family.

The chain is UPF0301 protein CHU_1773 from Cytophaga hutchinsonii (strain ATCC 33406 / DSM 1761 / CIP 103989 / NBRC 15051 / NCIMB 9469 / D465).